The primary structure comprises 217 residues: GrpE protein homolog 1, mitochondrial (217 aa).

A mitochondrion-targeting transit peptide spans 1 to 27 (MAAQCVRLARRSLPALALSLRPSPRLL). The disordered stretch occupies residues 29-56 (TATKQKNSGQNLEEDMGQSEQKADPPAT). Polar residues predominate over residues 30–39 (ATKQKNSGQN). Lys94 is subject to N6-acetyllysine; alternate. At Lys94 the chain carries N6-succinyllysine; alternate. An N6-acetyllysine modification is found at Lys100. Lys120 is modified (N6-succinyllysine). The residue at position 215 (Lys215) is an N6-acetyllysine; alternate. The residue at position 215 (Lys215) is an N6-succinyllysine; alternate.

It belongs to the GrpE family. As to quaternary structure, probable component of the PAM complex at least composed of a mitochondrial HSP70 protein, GRPEL1 or GRPEL2, TIMM44, TIMM16/PAM16 and TIMM14/DNAJC19. Binds to HSP70, HSC70 and HSJ1B.

It localises to the mitochondrion matrix. Functionally, essential component of the PAM complex, a complex required for the translocation of transit peptide-containing proteins from the inner membrane into the mitochondrial matrix in an ATP-dependent manner. Seems to control the nucleotide-dependent binding of mitochondrial HSP70 to substrate proteins. This Homo sapiens (Human) protein is GrpE protein homolog 1, mitochondrial (GRPEL1).